The primary structure comprises 492 residues: Probable cytochrome P450 310a1 (492 aa).

Cysteine 428 lines the heme pocket.

The protein belongs to the cytochrome P450 family. It depends on heme as a cofactor.

It is found in the endoplasmic reticulum membrane. The protein localises to the microsome membrane. Its function is as follows. May be involved in the metabolism of insect hormones and in the breakdown of synthetic insecticides. This is Probable cytochrome P450 310a1 (Cyp310a1) from Drosophila melanogaster (Fruit fly).